Reading from the N-terminus, the 219-residue chain is ATP synthase subunit a (219 aa).

The next 6 helical transmembrane spans lie at 16 to 36, 57 to 79, 96 to 116, 122 to 142, 158 to 178, and 184 to 204; these read LSNW…FWLI, LLMG…FILF, LAVT…YTWI, ALAH…MVLM, LAAN…QGTL, and TSIV…VAII.

Belongs to the ATPase A chain family. As to quaternary structure, F-type ATPases have 2 components, CF(1) - the catalytic core - and CF(0) - the membrane proton channel. CF(1) has five subunits: alpha(3), beta(3), gamma(1), delta(1), epsilon(1). CF(0) has three main subunits: a, b and c.

The protein resides in the mitochondrion inner membrane. Functionally, mitochondrial membrane ATP synthase (F(1)F(0) ATP synthase or Complex V) produces ATP from ADP in the presence of a proton gradient across the membrane which is generated by electron transport complexes of the respiratory chain. F-type ATPases consist of two structural domains, F(1) - containing the extramembraneous catalytic core and F(0) - containing the membrane proton channel, linked together by a central stalk and a peripheral stalk. During catalysis, ATP synthesis in the catalytic domain of F(1) is coupled via a rotary mechanism of the central stalk subunits to proton translocation. Key component of the proton channel; it may play a direct role in the translocation of protons across the membrane. The polypeptide is ATP synthase subunit a (ATP6) (Artemia franciscana (Brine shrimp)).